The following is a 140-amino-acid chain: MTSMTQSLREVIKAMTKARNFERVLGKITLVSAAPGKVICEMKVEEEHTNAIGTLHGGLTATLVDNISTMALLCTERGAPGVSVDMNITYMSPAKLGEDIVITAHVLKQGKTLAFTSVDLTNKATGKLIAQGRHTKHLGN.

Methionine 1 carries the post-translational modification N-acetylmethionine. Threonine 2 carries the post-translational modification N-acetylthreonine; in Acyl-coenzyme A thioesterase 13, N-terminally processed. Lysine 27, lysine 37, and lysine 43 each carry N6-acetyllysine. Residue glutamate 46 coordinates CoA. Positions 50 and 81 each coordinate substrate. Residues serine 83, 90-95, and 108-113 each bind CoA; these read YMSPAK and KQGKTL. N6-acetyllysine occurs at positions 108 and 127. A CoA-binding site is contributed by histidine 137.

Belongs to the thioesterase PaaI family. Homotetramer. Interacts with PCTP.

It is found in the cytoplasm. It localises to the cytosol. The protein localises to the mitochondrion. Its subcellular location is the nucleus. The protein resides in the cytoskeleton. It is found in the spindle. The catalysed reaction is a fatty acyl-CoA + H2O = a fatty acid + CoA + H(+). It carries out the reaction decanoyl-CoA + H2O = decanoate + CoA + H(+). The enzyme catalyses octanoyl-CoA + H2O = octanoate + CoA + H(+). It catalyses the reaction butanoyl-CoA + H2O = butanoate + CoA + H(+). The catalysed reaction is hexanoyl-CoA + H2O = hexanoate + CoA + H(+). It carries out the reaction tetradecanoyl-CoA + H2O = tetradecanoate + CoA + H(+). The enzyme catalyses hexadecanoyl-CoA + H2O = hexadecanoate + CoA + H(+). It catalyses the reaction dodecanoyl-CoA + H2O = dodecanoate + CoA + H(+). The catalysed reaction is (9Z)-octadecenoyl-CoA + H2O = (9Z)-octadecenoate + CoA + H(+). It carries out the reaction (5Z,8Z,11Z,14Z)-eicosatetraenoyl-CoA + H2O = (5Z,8Z,11Z,14Z)-eicosatetraenoate + CoA + H(+). Catalyzes the hydrolysis of acyl-CoAs into free fatty acids and coenzyme A (CoASH), regulating their respective intracellular levels. Has acyl-CoA thioesterase activity towards medium (C12) and long-chain (C18) fatty acyl-CoA substrates. Can also hydrolyze 3-hydroxyphenylacetyl-CoA and 3,4-dihydroxyphenylacetyl-CoA (in vitro). May play a role in controlling adaptive thermogenesis. This chain is Acyl-coenzyme A thioesterase 13, found in Homo sapiens (Human).